A 448-amino-acid chain; its full sequence is Solute carrier family 52, riboflavin transporter, member 1 (448 aa).

5 helical membrane-spanning segments follow: residues 14–34, 47–67, 79–99, 124–144, and 147–167; these read LLVALFGMGSWAAVNGIWVEL, LPSYLSVVVALGNLGLLVVTL, VPIQVVQVLSVVGTALLAPLW, ACCTSNVTFLPFLSHLPPPFL, and FFLGQGLSALLPCVLALVQGV. A glycan (N-linked (GlcNAc...) asparagine) is linked at N178. A helical transmembrane segment spans residues 191–211; that stretch reads FPASTFFWALTALLVTSAAAF. The disordered stretch occupies residues 225 to 267; that stretch reads TTGGSGPELQLGSPGAEEEEKEEEEALPLQEPPSQAAGTIPGP. The span at 240 to 250 shows a compositional bias: acidic residues; that stretch reads AEEEEKEEEEA. 5 helical membrane passes run 280-300, 315-335, 342-362, 369-389, and 407-427; these read AFLLGLMAFTSAVTNGVLPSV, LAVVLGSAANPLACFLAMGVL, LVGLSLLGMLFGAYLMALAIL, VGTTAGVVLVVLSWVLCLCVF, and ALLAAGVAIQVGSLLGAGAMF.

This sequence belongs to the riboflavin transporter family. In terms of tissue distribution, widely expressed. Highly expressed in the testis, placenta and small intestine. Expressed at lower level in other tissues.

Its subcellular location is the cell membrane. It catalyses the reaction riboflavin(in) = riboflavin(out). With respect to regulation, the activity is strongly inhibited by riboflavin analogs, such as lumiflavin. Weakly inhibited by flavin adenine dinucleotide (FAD). Its function is as follows. Plasma membrane transporter mediating the uptake by cells of the water soluble vitamin B2/riboflavin that plays a key role in biochemical oxidation-reduction reactions of the carbohydrate, lipid, and amino acid metabolism. Humans are unable to synthesize vitamin B2/riboflavin and must obtain it via intestinal absorption. (Microbial infection) May function as a cell receptor to retroviral envelopes similar to the porcine endogenous retrovirus (PERV-A). The chain is Solute carrier family 52, riboflavin transporter, member 1 from Homo sapiens (Human).